Here is a 602-residue protein sequence, read N- to C-terminus: MQSGRQKYIRNFSIVAHIDHGKSTLADRLIEATGTLTEREMDTQVLDNMDLEKERGITIKSQAVRLIYKRNTGEEYTLNLIDTPGHVDFNYEVSRSLAACEGAILVVDATQGIQAQTLANCYLALDNDLEIVPVINKIDLPSARPEEVKQEIEDVIGIEAEDAPLVSAKTGLNIKDALEAIVNKVPAPDGDEKAPLKALIFDSYYDSYKGVVCHIRVKEGAIKEGTEIKLMNTGKVYEVVEVGVFVPNYMPVDELKAGDVGYVTASIKNVRDARVGDTITEAKRSANEALSGYRPAVPMVFSGIYPVDGAKYEELKEALEKLQVNDAALSFEPETSIALGFGFRCGFLGLLHMDIIQERLEREFNLDIITTAPSVIYKITKTDGTLIELTNPTNMPSPSEIKLMEEPIVKSSIITPSDYVGAVMDLAQNRRGIFKDMQYLDTTRVSLNYEIPLNEIIYDFFDALKSRTRGYASFDYELIGYKDADLVKLDILLNADVVDALSMIVPRERAYAKGRNMAQKLKEIIPRQMFEIPIQAAVGAKIIARETIKAMRKDVLAKCYGGDISRKRKLLEKQKEGKKRMRQVGSVEVPQEAFMAVLKTEE.

Residues 7-189 form the tr-type G domain; the sequence is KYIRNFSIVA…AIVNKVPAPD (183 aa). Residues 19–24 and 136–139 contribute to the GTP site; these read DHGKST and NKID.

It belongs to the TRAFAC class translation factor GTPase superfamily. Classic translation factor GTPase family. LepA subfamily.

It is found in the cell membrane. The enzyme catalyses GTP + H2O = GDP + phosphate + H(+). Functionally, required for accurate and efficient protein synthesis under certain stress conditions. May act as a fidelity factor of the translation reaction, by catalyzing a one-codon backward translocation of tRNAs on improperly translocated ribosomes. Back-translocation proceeds from a post-translocation (POST) complex to a pre-translocation (PRE) complex, thus giving elongation factor G a second chance to translocate the tRNAs correctly. Binds to ribosomes in a GTP-dependent manner. The polypeptide is Elongation factor 4 (Clostridium botulinum (strain Kyoto / Type A2)).